A 591-amino-acid polypeptide reads, in one-letter code: Paralemmin-3 (591 aa).

4 consecutive repeats follow at residues 171–174 (EKNK), 183–186 (EKNQ), 224–227 (EKNQ), and 234–237 (KNQD). Over residues 282–293 (DQTQSTSDQNME) the composition is skewed to polar residues. Disordered stretches follow at residues 282-317 (DQTQSTSDQNMETKLPTDIPQQKESQSEGKIQTKDQ), 332-413 (KGTT…QNQD), and 515-591 (PDLK…CVVM). Basic and acidic residues-rich tracts occupy residues 306 to 317 (SQSEGKIQTKDQ) and 349 to 383 (EPKEENPKAQDEKLDHHNESVSTVHEQKEVHDMDP). Composition is skewed to polar residues over residues 385 to 413 (QLSTHQKSLSISEDQNQGSVSLSDPQNQD) and 528 to 542 (QESSSHEPMSSTIAQ). Low complexity predominate over residues 543 to 554 (SSSAEGNSSPES). A compositionally biased stretch (polar residues) spans 559-575 (QKSQGTDSQQGGNTATQ). A Nuclear localization signal motif is present at residues 579-583 (RRKKK). 2 S-palmitoyl cysteine lipidation sites follow: cysteine 585 and cysteine 587. At cysteine 588 the chain carries Cysteine methyl ester. A lipid anchor (S-farnesyl cysteine) is attached at cysteine 588. Positions 589–591 (VVM) are cleaved as a propeptide — removed in mature form.

This sequence belongs to the paralemmin family. May be phosphorylated during oocyte maturation. In terms of processing, palmitoylated on Cys-585 and Cys-587 and prenylated on Cys-588; which is required for membrane association. As to expression, in Xenopus oocyte, in the central nervous system cells of tadpoles and adult frogs, and transiently in epithelial cells of stomach and gut of tadpoles. Highly expressed in kidney.

Its subcellular location is the cytoplasm. The protein localises to the nucleus. It localises to the cell membrane. Its function is as follows. Maternal ATP-binding protein that may have multiple functions during development, one of which may be associated with the development and maintenance of the central nervous system. The sequence is that of Paralemmin-3 (palm3) from Xenopus laevis (African clawed frog).